We begin with the raw amino-acid sequence, 453 residues long: Bifunctional protein GlmU (453 aa).

Positions 1 to 225 (MNIVILAAGT…EWETLGVNSK (225 aa)) are pyrophosphorylase. Residues 6–9 (LAAG), K20, Q71, 76–77 (GT), 98–100 (YGD), G135, E150, N165, and N223 each bind UDP-N-acetyl-alpha-D-glucosamine. Residue D100 coordinates Mg(2+). N223 serves as a coordination point for Mg(2+). The segment at 226–246 (QQLAELERIHQRNVADALLVA) is linker. Residues 247–453 (GVTLADPARL…GYVRPTKKKS (207 aa)) form an N-acetyltransferase region. Residues R329 and K347 each coordinate UDP-N-acetyl-alpha-D-glucosamine. H359 functions as the Proton acceptor in the catalytic mechanism. The UDP-N-acetyl-alpha-D-glucosamine site is built by Y362 and N373. Acetyl-CoA contacts are provided by residues A376, 382–383 (NY), S401, and A419.

In the N-terminal section; belongs to the N-acetylglucosamine-1-phosphate uridyltransferase family. This sequence in the C-terminal section; belongs to the transferase hexapeptide repeat family. In terms of assembly, homotrimer. The cofactor is Mg(2+).

It is found in the cytoplasm. The enzyme catalyses alpha-D-glucosamine 1-phosphate + acetyl-CoA = N-acetyl-alpha-D-glucosamine 1-phosphate + CoA + H(+). It catalyses the reaction N-acetyl-alpha-D-glucosamine 1-phosphate + UTP + H(+) = UDP-N-acetyl-alpha-D-glucosamine + diphosphate. It functions in the pathway nucleotide-sugar biosynthesis; UDP-N-acetyl-alpha-D-glucosamine biosynthesis; N-acetyl-alpha-D-glucosamine 1-phosphate from alpha-D-glucosamine 6-phosphate (route II): step 2/2. The protein operates within nucleotide-sugar biosynthesis; UDP-N-acetyl-alpha-D-glucosamine biosynthesis; UDP-N-acetyl-alpha-D-glucosamine from N-acetyl-alpha-D-glucosamine 1-phosphate: step 1/1. It participates in bacterial outer membrane biogenesis; LPS lipid A biosynthesis. In terms of biological role, catalyzes the last two sequential reactions in the de novo biosynthetic pathway for UDP-N-acetylglucosamine (UDP-GlcNAc). The C-terminal domain catalyzes the transfer of acetyl group from acetyl coenzyme A to glucosamine-1-phosphate (GlcN-1-P) to produce N-acetylglucosamine-1-phosphate (GlcNAc-1-P), which is converted into UDP-GlcNAc by the transfer of uridine 5-monophosphate (from uridine 5-triphosphate), a reaction catalyzed by the N-terminal domain. The chain is Bifunctional protein GlmU from Paraburkholderia xenovorans (strain LB400).